Here is a 176-residue protein sequence, read N- to C-terminus: PKHD-type hydroxylase Mfla_0096 (176 aa).

One can recognise a Fe2OG dioxygenase domain in the interval Lys78–Ala147.

The cofactor is Fe(2+). It depends on L-ascorbate as a cofactor.

This is PKHD-type hydroxylase Mfla_0096 from Methylobacillus flagellatus (strain ATCC 51484 / DSM 6875 / VKM B-1610 / KT).